The sequence spans 702 residues: Arginine decarboxylase 1, chloroplastic (702 aa).

The N-terminal 52 residues, 1–52 (MPALAFVDTPIDTFSSIFTPSSVSTAVVDGSCHWSPSLSSSLYRIDGWGAPY), are a transit peptide targeting the chloroplast. K136 carries the post-translational modification N6-(pyridoxal phosphate)lysine. Pyridoxal 5'-phosphate-binding positions include S288, G325, and 374 to 377 (ESGR). Residue 320-330 (IDIGGGLGIDY) coordinates substrate. 436–437 (YV) is a substrate binding site. C524 functions as the Proton donor; shared with dimeric partner in the catalytic mechanism. A substrate-binding site is contributed by D525. A pyridoxal 5'-phosphate-binding site is contributed by Y565.

It belongs to the Orn/Lys/Arg decarboxylase class-II family. SpeA subfamily. As to quaternary structure, homodimer. Only the dimer is catalytically active, as the active sites are constructed of residues from both monomers. May form a head-to-tail homodimer. Homodimer and heterodimer with ADC2. Pyridoxal 5'-phosphate is required as a cofactor. The cofactor is Mg(2+).

The protein localises to the plastid. Its subcellular location is the chloroplast. It localises to the cytoplasm. It is found in the cytosol. It catalyses the reaction L-arginine + H(+) = agmatine + CO2. The protein operates within amine and polyamine biosynthesis; agmatine biosynthesis; agmatine from L-arginine: step 1/1. Its function is as follows. Required for the biosynthesis of putrescine. Catalyzes the first step of polyamine (PA) biosynthesis to produce putrescine from arginine. Is a minor contributor to basal arginine decarboxylase (ADC) activity and putrescine biosynthesis. Accumulation of putrescine plays a positive role in freezing tolerance. Production of polyamines is essential for normal seed development. Controls PA homeostasis which is crucial for normal plant growth and development. The polypeptide is Arginine decarboxylase 1, chloroplastic (Arabidopsis thaliana (Mouse-ear cress)).